Reading from the N-terminus, the 513-residue chain is ATP synthase subunit alpha (513 aa).

169–176 is a binding site for ATP; the sequence is GDRQIGKT.

The protein belongs to the ATPase alpha/beta chains family. As to quaternary structure, F-type ATPases have 2 components, CF(1) - the catalytic core - and CF(0) - the membrane proton channel. CF(1) has five subunits: alpha(3), beta(3), gamma(1), delta(1), epsilon(1). CF(0) has three main subunits: a(1), b(2) and c(9-12). The alpha and beta chains form an alternating ring which encloses part of the gamma chain. CF(1) is attached to CF(0) by a central stalk formed by the gamma and epsilon chains, while a peripheral stalk is formed by the delta and b chains.

The protein localises to the cell inner membrane. The catalysed reaction is ATP + H2O + 4 H(+)(in) = ADP + phosphate + 5 H(+)(out). Functionally, produces ATP from ADP in the presence of a proton gradient across the membrane. The alpha chain is a regulatory subunit. The protein is ATP synthase subunit alpha of Francisella tularensis subsp. tularensis (strain SCHU S4 / Schu 4).